The sequence spans 134 residues: Sec-independent protein translocase protein TatB (134 aa).

A helical transmembrane segment spans residues 2–22 (FDGIGFMELLLIGILGLVVLG). The interval 90-134 (AESVNRPYKVEDTSPVAPKASPDESPSVVEAKSSEATSENSSTPK) is disordered. The segment covering 123–134 (SEATSENSSTPK) has biased composition (polar residues).

This sequence belongs to the TatB family. The Tat system comprises two distinct complexes: a TatABC complex, containing multiple copies of TatA, TatB and TatC subunits, and a separate TatA complex, containing only TatA subunits. Substrates initially bind to the TatABC complex, which probably triggers association of the separate TatA complex to form the active translocon.

Its subcellular location is the cell inner membrane. Functionally, part of the twin-arginine translocation (Tat) system that transports large folded proteins containing a characteristic twin-arginine motif in their signal peptide across membranes. Together with TatC, TatB is part of a receptor directly interacting with Tat signal peptides. TatB may form an oligomeric binding site that transiently accommodates folded Tat precursor proteins before their translocation. The chain is Sec-independent protein translocase protein TatB from Shewanella frigidimarina (strain NCIMB 400).